Consider the following 160-residue polypeptide: Arsenate reductase 2.1 (160 aa).

Residues 42-143 (SNPRVAIIDV…WELSGQPVCR (102 aa)) form the Rhodanese domain. Residue cysteine 94 is the Cysteine persulfide intermediate of the active site.

The enzyme catalyses [glutaredoxin]-dithiol + arsenate + glutathione + H(+) = glutathionyl-S-S-[glutaredoxin] + arsenite + H2O. Functionally, possesses arsenate reductase activity in vitro. Catalyzes the reduction of arsenate [As(V)] to arsenite [As(III)]. May play a role in arsenic retention in roots. Its function is as follows. Possesses phosphatase activity towards p-nitrophenyl phosphate in vitro. The polypeptide is Arsenate reductase 2.1 (ACR2.1) (Oryza sativa subsp. japonica (Rice)).